A 476-amino-acid polypeptide reads, in one-letter code: Probable periplasmic serine endoprotease DegP-like (476 aa).

Residues 1–27 (MSIPRLKSYFTILATVLVLGQAVSAQA) form the signal peptide. Residues H116, D146, and S219 each act as charge relay system in the active site. Substrate-binding positions include 217-219 (GNS) and 274-278 (LGVVI). PDZ domains lie at 263–354 (LKTG…IRDG) and 360–465 (ELTV…LRQG).

Belongs to the peptidase S1C family.

It localises to the periplasm. It catalyses the reaction Acts on substrates that are at least partially unfolded. The cleavage site P1 residue is normally between a pair of hydrophobic residues, such as Val-|-Val.. Might be efficient in the degradation of transiently denatured and unfolded proteins which accumulate in the periplasm following stress conditions. The sequence is that of Probable periplasmic serine endoprotease DegP-like (mucD) from Pseudomonas fluorescens (strain ATCC BAA-477 / NRRL B-23932 / Pf-5).